Here is a 463-residue protein sequence, read N- to C-terminus: GTPase Der (463 aa).

2 EngA-type G domains span residues 3-166 (PVVA…PESG) and 177-350 (IRIA…QSAM). GTP contacts are provided by residues 9-16 (GRTNVGKS), 56-60 (DTGGI), 118-121 (NKID), 183-190 (GRPNVGKS), 230-234 (DTAGI), and 295-298 (NKWD). Residues 351-435 (LDLSASRLTQ…PLKLVFKSAE (85 aa)) form the KH-like domain.

This sequence belongs to the TRAFAC class TrmE-Era-EngA-EngB-Septin-like GTPase superfamily. EngA (Der) GTPase family. In terms of assembly, associates with the 50S ribosomal subunit.

GTPase that plays an essential role in the late steps of ribosome biogenesis. This chain is GTPase Der, found in Methylococcus capsulatus (strain ATCC 33009 / NCIMB 11132 / Bath).